Consider the following 120-residue polypeptide: BLOC-1-related complex subunit 8 (120 aa).

Positions 101-120 are disordered; the sequence is MNTSAQGHSQEKLSPPPSLA. Ser-109 carries the post-translational modification Phosphoserine.

This sequence belongs to the BORCS8 family. As to quaternary structure, component of the BLOC-one-related complex (BORC) which is composed of BLOC1S1, BLOC1S2, BORCS5, BORCS6, BORCS7, BORCS8, KXD1 and SNAPIN.

The protein resides in the lysosome membrane. Its function is as follows. As part of the BLOC-one-related complex (BORC), it plays a role in the movement and localization of lysosomes at the cell periphery. Associated with the cytosolic face of lysosomes, BORC recruits ARL8B to the lysosomal membrane and couples lysosomes to microtubule plus-end-directed kinesin motors, driving lysosome movement toward the cell periphery. The chain is BLOC-1-related complex subunit 8 from Mus musculus (Mouse).